A 428-amino-acid polypeptide reads, in one-letter code: Dihydroorotase (428 aa).

Residues His-59 and His-61 each coordinate Zn(2+). Residues His-61 to Arg-63 and Asn-93 contribute to the substrate site. Zn(2+) contacts are provided by Asp-151, His-178, and His-231. Asn-277 lines the substrate pocket. Position 304 (Asp-304) interacts with Zn(2+). Asp-304 is a catalytic residue. Residues His-308 and Phe-322–Gly-323 each bind substrate.

Belongs to the metallo-dependent hydrolases superfamily. DHOase family. Class I DHOase subfamily. It depends on Zn(2+) as a cofactor.

The catalysed reaction is (S)-dihydroorotate + H2O = N-carbamoyl-L-aspartate + H(+). Its pathway is pyrimidine metabolism; UMP biosynthesis via de novo pathway; (S)-dihydroorotate from bicarbonate: step 3/3. In terms of biological role, catalyzes the reversible cyclization of carbamoyl aspartate to dihydroorotate. The sequence is that of Dihydroorotase from Halalkalibacterium halodurans (strain ATCC BAA-125 / DSM 18197 / FERM 7344 / JCM 9153 / C-125) (Bacillus halodurans).